A 145-amino-acid chain; its full sequence is Peptide methionine sulfoxide reductase MsrB (145 aa).

The MsrB domain occupies Ser-4–Tyr-127. The active-site Nucleophile is the Cys-116.

It belongs to the MsrB Met sulfoxide reductase family.

The enzyme catalyses L-methionyl-[protein] + [thioredoxin]-disulfide + H2O = L-methionyl-(R)-S-oxide-[protein] + [thioredoxin]-dithiol. The polypeptide is Peptide methionine sulfoxide reductase MsrB (Streptococcus pyogenes serotype M3 (strain ATCC BAA-595 / MGAS315)).